The chain runs to 246 residues: uncharacterized protein (246 aa).

This is an uncharacterized protein from Dictyostelium discoideum (Social amoeba).